A 163-amino-acid chain; its full sequence is Odorant-binding protein 1a (163 aa).

The signal sequence occupies residues 1-16 (MAKFLLLALTFGLAHA). Disulfide bonds link C50–C54 and C69–C161.

The protein belongs to the calycin superfamily. Lipocalin family. May form a heterodimer with OBP1B. In terms of processing, the N-terminus may be blocked. In terms of tissue distribution, expressed in nasal mucosa (at protein level). Specifically detected in septal and lateral nasal glands.

Its subcellular location is the secreted. In terms of biological role, binds the chemical odorant 2-isobutyl-3-methoxypyrazine. The chain is Odorant-binding protein 1a from Mus musculus (Mouse).